Reading from the N-terminus, the 510-residue chain is Histidine ammonia-lyase (510 aa).

Positions 143 to 145 form a cross-link, 5-imidazolinone (Ala-Gly); sequence ASG. Ser-144 is subject to 2,3-didehydroalanine (Ser).

It belongs to the PAL/histidase family. In terms of processing, contains an active site 4-methylidene-imidazol-5-one (MIO), which is formed autocatalytically by cyclization and dehydration of residues Ala-Ser-Gly.

It is found in the cytoplasm. It carries out the reaction L-histidine = trans-urocanate + NH4(+). It participates in amino-acid degradation; L-histidine degradation into L-glutamate; N-formimidoyl-L-glutamate from L-histidine: step 1/3. The sequence is that of Histidine ammonia-lyase from Shewanella sediminis (strain HAW-EB3).